Consider the following 451-residue polypeptide: MSDFFHSDVLSVSELNAFAKSILENHLAGLWIAGEVSNLTRAASGHYYFSLKDSRAQVRCAMFKGAAARLAKPLKEGDHIEVAGKISIYETRGEFQITVNEVRLKGLGQLYEAYERLKAQLQAEGAFAAERKKPLPARPQCIGIVTSLAAAALRDVVTTLKRRAPEIPVIVYPTPVQGTGSELQIAQAIKTASQRAECDVLIVCRGGGSIEDLWAFNEEPVVRAIEACTVPVVSGVGHETDFTLADFVADVRAPTPTGAAELVSPNRQESLHRLAQAQGRLKTVLEQRYFDASQKLDWLARQIRHPRQKLDEQRASIGKLAQTLSYSMKQNLRAHTARFERQTQALQHYRPDVSVCKNNIVRLQTALPAAFSQLLTHRRQSLTAQAALLEAVSPQHILERGFSVVKDTRGQVIRNADVLKQGQKLHITFADGETDVRVSKEQGQQDLFDCI.

Belongs to the XseA family. As to quaternary structure, heterooligomer composed of large and small subunits.

It localises to the cytoplasm. It carries out the reaction Exonucleolytic cleavage in either 5'- to 3'- or 3'- to 5'-direction to yield nucleoside 5'-phosphates.. In terms of biological role, bidirectionally degrades single-stranded DNA into large acid-insoluble oligonucleotides, which are then degraded further into small acid-soluble oligonucleotides. The protein is Exodeoxyribonuclease 7 large subunit of Neisseria meningitidis serogroup C / serotype 2a (strain ATCC 700532 / DSM 15464 / FAM18).